The following is a 1009-amino-acid chain: Delphilin (1009 aa).

Disordered regions lie at residues 28–82, 170–193, 322–369, 414–635, and 990–1009; these read CRSK…SNTM, EGPVDYPQSDSEPEETPSAPRSRS, ASPD…SRDT, ELSS…SDNN, and SETQGTENPKSPRIASPLAW. The span at 44 to 53 shows a compositional bias: basic and acidic residues; the sequence is RSQDHHERPQ. The region spanning 95–172 is the PDZ domain; that stretch reads TIRVYRGKKS…MPSLVVEEGP (78 aa). The span at 322-332 shows a compositional bias: polar residues; it reads ASPDSVDSNPY. Low complexity-rich tracts occupy residues 334–352 and 427–439; these read SLDSPPASPLPSDELSPLP and DDSTSVSYSSGSD. Composition is skewed to pro residues over residues 441–455, 462–477, and 484–493; these read IPPPPQSPPPPPPPL, SPLPITPEHLPQPPPA, and IAPPPPPPRP. Over residues 521–535 the composition is skewed to low complexity; the sequence is SSPQPSSQPILQLHQ. Residues 557–602 are compositionally biased toward polar residues; that stretch reads AQHTRLQHPSQSIYQSQQTTVPRTSPSLTKQKSLHSQPSQQSFEGT. Pro residues predominate over residues 607-628; it reads VPPPPPPPLPPPCDPPPLPKPS. The 381-residue stretch at 629–1009 folds into the FH2 domain; sequence PKASDNNHMS…SPRIASPLAW (381 aa).

The protein resides in the postsynaptic cell membrane. Its function is as follows. Postsynaptic scaffolding protein. In Danio rerio (Zebrafish), this protein is Delphilin (grid2ip).